Reading from the N-terminus, the 594-residue chain is UvrABC system protein C (594 aa).

Positions 14-91 (DQPGCYLMKD…IKKYDPKYNI (78 aa)) constitute a GIY-YIG domain. The UVR domain occupies 196-231 (KEVRSELEIKMYEASEKLEFERAKELRDQIAHIDAI).

The protein belongs to the UvrC family. In terms of assembly, interacts with UvrB in an incision complex.

The protein localises to the cytoplasm. Its function is as follows. The UvrABC repair system catalyzes the recognition and processing of DNA lesions. UvrC both incises the 5' and 3' sides of the lesion. The N-terminal half is responsible for the 3' incision and the C-terminal half is responsible for the 5' incision. In Bacillus cereus (strain G9842), this protein is UvrABC system protein C.